A 982-amino-acid chain; its full sequence is Zinc finger and BTB domain-containing protein 4 (982 aa).

The 102-residue stretch at 30-131 folds into the BTB domain; it reads CDVTLIAGDT…IYSARLALPG (102 aa). A Glycyl lysine isopeptide (Lys-Gly) (interchain with G-Cter in SUMO2) cross-link involves residue Lys40. Residues 71-103 form a disordered region; that stretch reads TGGSAPSPATTTAASSSSSSPPPASPHSSSPPR. Over residues 74–89 the composition is skewed to low complexity; sequence SAPSPATTTAASSSSS. Residues 165–324 are interaction with CBFA2T3; that stretch reads VPPAPTSMVT…CRYCEKVFAL (160 aa). The C2H2-type 1; atypical zinc finger occupies 210–232; that stretch reads FPCPRCGKSFIHPKRLQTHEAQC. The disordered stretch occupies residues 234-255; the sequence is RGSNTRGSAGLGPGVSGSGGPA. Gly residues predominate over residues 242–255; it reads AGLGPGVSGSGGPA. 3 consecutive C2H2-type zinc fingers follow at residues 285–307, 313–335, and 341–364; these read YVCAACERSYVTLSSLKRHSNVH, YPCRYCEKVFALAEYRTKHEVWH, and YQCIFCWDTFVTYYNLKTHQRAFH. Ser367 carries the post-translational modification Phosphoserine. The segment at 404 to 578 is disordered; that stretch reads KTYSQGAPEA…QLQAPPPLCQ (175 aa). Residues 430-446 are compositionally biased toward pro residues; it reads SPQPLPPPAPEPGPPPS. Residues 467–477 are compositionally biased toward gly residues; the sequence is AAGGGPAGTGG. Low complexity-rich tracts occupy residues 478–488 and 507–529; these read SQAASVITYTT and ATPTSPASTAVSPATAAGPATAT. Lys548 is covalently cross-linked (Glycyl lysine isopeptide (Lys-Gly) (interchain with G-Cter in SUMO2)). Over residues 552 to 565 the composition is skewed to gly residues; the sequence is GLSGSGGSPTGTGR. Residue Lys590 forms a Glycyl lysine isopeptide (Lys-Gly) (interchain with G-Cter in SUMO2) linkage. The segment covering 591–600 has biased composition (basic and acidic residues); sequence RRISETDLRP. 4 disordered regions span residues 591–700, 715–738, 759–839, and 854–880; these read RRIS…ERRH, LRKHQEAHSGGSHTSRTGRRSSTR, QRHA…GGGS, and GGSREPSAGKGKPGNEGSLGASEGDRM. Residues 604–627 show a composition bias toward acidic residues; the sequence is SGEEVEESEEEEEEEEEEDQEEQE. The span at 628–637 shows a compositional bias: basic and acidic residues; it reads ESKAGGEDQL. C2H2-type zinc fingers lie at residues 700-722 and 739-761; these read HRCGDCAQAFATVRKLRKHQEAH and FTCPHCAKVCKTAAALNRHGQRH. 2 positions are modified to phosphothreonine; by HIPK2: Thr769 and Thr771. Residues 799 to 820 show a composition bias toward low complexity; that stretch reads SSSSGEAGSGSAAAAEASESAS. Position 953 is a phosphothreonine; by HIPK2 (Thr953).

In terms of assembly, interacts with HIPK2. Interacts with CBFA2T3. Interacts with ZBTB38. Post-translationally, phosphorylated by HIPK2. This phosphorylation reduces stability and triggers ZBTB4 protein degradation in response to DNA damage. In terms of tissue distribution, expressed in adult and aged myogenic satellite cells.

It is found in the nucleus. The protein localises to the chromosome. In terms of biological role, transcriptional repressor with bimodal DNA-binding specificity. Represses transcription in a methyl-CpG-dependent manner. Binds with a higher affinity to methylated CpG dinucleotides in the consensus sequence 5'-CGCG-3' but can also bind to the non-methylated consensus sequence 5'-CTGCNA-3' also known as the consensus kaiso binding site (KBS). Can also bind specifically to a single methyl-CpG pair and can bind hemimethylated DNA but with a lower affinity compared to methylated DNA. Plays a role in postnatal myogenesis, may be involved in the regulation of satellite cells self-renewal. The polypeptide is Zinc finger and BTB domain-containing protein 4 (Zbtb4) (Mus musculus (Mouse)).